Consider the following 368-residue polypeptide: MVINTTDPEERVINLSFVLGFIKEIFGLIWIRIYILIPILGVLIGLLVIVWLERKISAGIQQRIGPEYAGPLGILQALADGIKLLLKEDIIPSRGDLWLFSIGPAIVVIPILSSYLVIPFGRHIVLADLSIGVFFRIAVSSIAPLGLLMAGYGSNNKYSFSGGLRAAAQSISYEIPLALCVLSISLLSNSLGTVDIVEAQSRYGFWGWNLWRQPIGFIAFFISSLAECERLPFDLPEAEEELVAGYQTEYSGIKFGLFYVASYLNLLASSLFVTILYLGGWNFSIPSIPISEYFEWDSINGTSEVLGITMGILITLAKAYLFLFISITARWTLPRMRIDQLLDLGWKFLLPIALGNLLLTASFQLLLL.

The next 9 helical transmembrane spans lie at 11–31, 33–53, 98–118, 131–151, 177–197, 205–225, 255–275, 305–325, and 348–368; these read RVIN…LIWI, IYIL…VWLE, WLFS…YLVI, IGVF…LMAG, LALC…VDIV, FWGW…ISSL, FGLF…FVTI, VLGI…FLFI, and FLLP…LLLL.

It belongs to the complex I subunit 1 family. As to quaternary structure, NDH is composed of at least 16 different subunits, 5 of which are encoded in the nucleus.

It localises to the plastid. Its subcellular location is the chloroplast thylakoid membrane. The catalysed reaction is a plastoquinone + NADH + (n+1) H(+)(in) = a plastoquinol + NAD(+) + n H(+)(out). The enzyme catalyses a plastoquinone + NADPH + (n+1) H(+)(in) = a plastoquinol + NADP(+) + n H(+)(out). NDH shuttles electrons from NAD(P)H:plastoquinone, via FMN and iron-sulfur (Fe-S) centers, to quinones in the photosynthetic chain and possibly in a chloroplast respiratory chain. The immediate electron acceptor for the enzyme in this species is believed to be plastoquinone. Couples the redox reaction to proton translocation, and thus conserves the redox energy in a proton gradient. This chain is NAD(P)H-quinone oxidoreductase subunit 1, chloroplastic, found in Cycas taitungensis (Prince sago).